Reading from the N-terminus, the 309-residue chain is NADH-cytochrome b5 reductase 1 (309 aa).

Residues 29-49 (EFVPYAVALTAVLAGFKLFTG) form a helical membrane-spanning segment. One can recognise an FAD-binding FR-type domain in the interval 60-165 (TEFQEFVLKE…RGPKGAMVYT (106 aa)). FAD contacts are provided by residues 145 to 160 (TTLK…GPKG) and 171 to 208 (HIGM…KVDL).

It belongs to the flavoprotein pyridine nucleotide cytochrome reductase family. As to quaternary structure, monomer. Component of the 2-(3-amino-3-carboxypropyl)histidine synthase complex composed of dph1, dph2, dph3 and a NADH-dependent reductase, predominantly cbr1. FAD serves as cofactor.

The protein localises to the mitochondrion outer membrane. It carries out the reaction 2 Fe(III)-[cytochrome b5] + NADH = 2 Fe(II)-[cytochrome b5] + NAD(+) + H(+). The catalysed reaction is 2 Fe(3+)-[Dph3] + NADH = 2 Fe(2+)-[Dph3] + NAD(+) + H(+). The protein operates within protein modification; peptidyl-diphthamide biosynthesis. Functionally, NADH-dependent reductase for dph3 and cytochrome b5. Required for the first step of diphthamide biosynthesis, a post-translational modification of histidine which occurs in elongation factor 2. Dph1 and dph2 transfer a 3-amino-3-carboxypropyl (ACP) group from S-adenosyl-L-methionine (SAM) to a histidine residue, the reaction is assisted by a reduction system comprising dph3 and a NADH-dependent reductase, predominantly cbr1. By reducing dph3, also involved in the formation of the tRNA wobble base modification mcm5s 2U (5-methoxycarbonylmethyl-2-thiouridine), mediated by the elongator complex. The cytochrome b5/NADH cytochrome b5 reductase electron transfer system supports the catalytic activity of several sterol biosynthetic enzymes. In Aspergillus clavatus (strain ATCC 1007 / CBS 513.65 / DSM 816 / NCTC 3887 / NRRL 1 / QM 1276 / 107), this protein is NADH-cytochrome b5 reductase 1 (cbr1).